The primary structure comprises 358 residues: UDP-N-acetylglucosamine--N-acetylmuramyl-(pentapeptide) pyrophosphoryl-undecaprenol N-acetylglucosamine transferase (358 aa).

Residues 11–13 (TGG), arginine 163, serine 191, isoleucine 245, and glutamine 290 contribute to the UDP-N-acetyl-alpha-D-glucosamine site.

The protein belongs to the glycosyltransferase 28 family. MurG subfamily.

It is found in the cell inner membrane. The catalysed reaction is di-trans,octa-cis-undecaprenyl diphospho-N-acetyl-alpha-D-muramoyl-L-alanyl-D-glutamyl-meso-2,6-diaminopimeloyl-D-alanyl-D-alanine + UDP-N-acetyl-alpha-D-glucosamine = di-trans,octa-cis-undecaprenyl diphospho-[N-acetyl-alpha-D-glucosaminyl-(1-&gt;4)]-N-acetyl-alpha-D-muramoyl-L-alanyl-D-glutamyl-meso-2,6-diaminopimeloyl-D-alanyl-D-alanine + UDP + H(+). The protein operates within cell wall biogenesis; peptidoglycan biosynthesis. Functionally, cell wall formation. Catalyzes the transfer of a GlcNAc subunit on undecaprenyl-pyrophosphoryl-MurNAc-pentapeptide (lipid intermediate I) to form undecaprenyl-pyrophosphoryl-MurNAc-(pentapeptide)GlcNAc (lipid intermediate II). This is UDP-N-acetylglucosamine--N-acetylmuramyl-(pentapeptide) pyrophosphoryl-undecaprenol N-acetylglucosamine transferase from Janthinobacterium sp. (strain Marseille) (Minibacterium massiliensis).